Consider the following 327-residue polypeptide: tRNA uridine(34) hydroxylase (327 aa).

A Rhodanese domain is found at 123–217 (SDPEVLLVDT…YLEEVKQEES (95 aa)). C177 serves as the catalytic Cysteine persulfide intermediate.

Belongs to the TrhO family.

The enzyme catalyses uridine(34) in tRNA + AH2 + O2 = 5-hydroxyuridine(34) in tRNA + A + H2O. Functionally, catalyzes oxygen-dependent 5-hydroxyuridine (ho5U) modification at position 34 in tRNAs. The sequence is that of tRNA uridine(34) hydroxylase from Shewanella piezotolerans (strain WP3 / JCM 13877).